Reading from the N-terminus, the 529-residue chain is Protein FLOURY ENDOSPERM 6, chloroplastic (529 aa).

Disordered stretches follow at residues Met-1 to Thr-22, Ala-39 to Arg-77, and Gln-166 to Ser-275. The N-terminal 71 residues, Met-1–Ser-71, are a transit peptide targeting the chloroplast. Positions Pro-9 to Ser-18 are enriched in pro residues. The span at Pro-41–Arg-57 shows a compositional bias: basic residues. A coiled-coil region spans residues Val-400–Val-452.

In terms of assembly, interacts with SKIPA. Interacts with ISA1. As to expression, expressed in leaves, stems and panicles. Expressed at lower levels in roots and developing seeds.

The protein localises to the plastid. It localises to the chloroplast. Involved in compound starch granule formation and starch synthesis in endosperm. May act as a regulatory scaffolding protein and affect starch synthesis and compound starch granule formation through direct interaction with isoamylase 1 (ISA1). Binds starch, amylopectin and amylose through its C-terminal carbohydrate-binding domain (CBM) in vitro. The chain is Protein FLOURY ENDOSPERM 6, chloroplastic from Oryza sativa subsp. japonica (Rice).